A 205-amino-acid chain; its full sequence is Outer-membrane lipoprotein carrier protein (205 aa).

The N-terminal stretch at 1–21 (MKKIVLLVTLVFSINYSFANA) is a signal peptide.

It belongs to the LolA family. Monomer.

The protein localises to the periplasm. Functionally, participates in the translocation of lipoproteins from the inner membrane to the outer membrane. Only forms a complex with a lipoprotein if the residue after the N-terminal Cys is not an aspartate (The Asp acts as a targeting signal to indicate that the lipoprotein should stay in the inner membrane). The sequence is that of Outer-membrane lipoprotein carrier protein from Francisella philomiragia subsp. philomiragia (strain ATCC 25017 / CCUG 19701 / FSC 153 / O#319-036).